The primary structure comprises 474 residues: Fumarate hydratase class II (474 aa).

Residues 104–106 (SGT), 128–131 (HPND), 138–140 (SSN), and T186 contribute to the substrate site. The active-site Proton donor/acceptor is H187. Residue S318 is part of the active site. Substrate-binding positions include S319 and 324 to 326 (KVN).

The protein belongs to the class-II fumarase/aspartase family. Fumarase subfamily. In terms of assembly, homotetramer.

It is found in the cytoplasm. It carries out the reaction (S)-malate = fumarate + H2O. It participates in carbohydrate metabolism; tricarboxylic acid cycle; (S)-malate from fumarate: step 1/1. In terms of biological role, involved in the TCA cycle. Catalyzes the stereospecific interconversion of fumarate to L-malate. This chain is Fumarate hydratase class II, found in Mycobacterium bovis (strain ATCC BAA-935 / AF2122/97).